Here is a 569-residue protein sequence, read N- to C-terminus: Phosphoglucomutase 2 (569 aa).

Residues 1–23 (MSFQIETVPTKPYEDQKPGTSGL) are disordered. Residue Ser-2 is modified to N-acetylserine. Arg-24 serves as a coordination point for alpha-D-glucose 1,6-bisphosphate. A phosphothreonine mark is found at Thr-111 and Thr-117. Ser-119 is an alpha-D-glucose 1,6-bisphosphate binding site. Ser-119 serves as the catalytic Phosphoserine intermediate. Residues Ser-119, Asp-290, Asp-292, and Asp-294 each coordinate Mg(2+). At Ser-119 the chain carries Phosphoserine. Positions 294, 295, 359, 378, 380, and 391 each coordinate alpha-D-glucose 1,6-bisphosphate.

Belongs to the phosphohexose mutase family. As to quaternary structure, monomer. It depends on Mg(2+) as a cofactor. The cofactor is Zn(2+). Post-translationally, O-glycosylated with mannose residues. Substrate of UDP-glucose--glycoprotein glucose phosphotransferase, linking glucose in a phosphodiester linkage to O-linked mannose.

The protein localises to the cytoplasm. It carries out the reaction alpha-D-glucose 1-phosphate = alpha-D-glucose 6-phosphate. The enzyme catalyses O-phospho-L-seryl-[protein] + alpha-D-glucose 1-phosphate = alpha-D-glucose 1,6-bisphosphate + L-seryl-[protein]. It catalyses the reaction alpha-D-glucose 1,6-bisphosphate + L-seryl-[protein] = O-phospho-L-seryl-[protein] + alpha-D-glucose 6-phosphate. Major phosphoglucomutase isozyme that catalyzes the reversible isomerization of alpha-D-glucose 1-phosphate to alpha-D-glucose 6-phosphate. The mechanism proceeds via the intermediate compound alpha-D-glucose 1,6-bisphosphate. Constitutes about 80-90% of the phosphoglucomutase activity in the cell. Key enzyme in hexose metabolism. The forward reaction is an essential step in the energy metabolism of galactose since the product of the galactose pathway enzymes in yeast is glucose 1-phosphate. The reverse reaction is an essential step for biosynthesis when carbon sources other than galactose are the energy source because glucose 1-phosphate is the starting point for the synthesis of UDP-glucose, which acts as a precursor for the synthesis of oligosaccharides and trehalose. This Saccharomyces cerevisiae (strain ATCC 204508 / S288c) (Baker's yeast) protein is Phosphoglucomutase 2.